The following is a 25-amino-acid chain: Caerin-1.18 (25 aa).

Leu-25 bears the Leucine amide mark.

As to expression, expressed by the skin dorsal glands.

Its subcellular location is the secreted. In terms of biological role, shows significant activity against Gram-positive organisms, but is less effective against Gram-negative organisms. The chain is Caerin-1.18 from Ranoidea gracilenta (Dainty green tree frog).